Consider the following 558-residue polypeptide: Thermosome subunit alpha (558 aa).

A disordered region spans residues 536 to 558; that stretch reads TEKGKKEGGEGAGAETPGAPSLE. The segment covering 548–558 has biased composition (low complexity); that stretch reads GAETPGAPSLE.

The protein belongs to the TCP-1 chaperonin family. Forms a Heterooligomeric complex of two stacked eight-membered rings.

Molecular chaperone; binds unfolded polypeptides in vitro, and has a weak ATPase activity. This chain is Thermosome subunit alpha (thsA), found in Sulfolobus acidocaldarius (strain ATCC 33909 / DSM 639 / JCM 8929 / NBRC 15157 / NCIMB 11770).